A 437-amino-acid chain; its full sequence is Isthmin-2 (437 aa).

The first 25 residues, 1–25, serve as a signal peptide directing secretion; it reads MLRARKGLWVLLSVLLAFWIERAIS. The interval 156-191 is disordered; the sequence is DSGEDGTGQAEDEEDDYDYDSGEPIPSGLGKTDGDW. A compositionally biased stretch (acidic residues) spans 165-176; it reads AEDEEDDYDYDS. The 46-residue stretch at 197–242 folds into the TSP type-1 domain; sequence EEKEEEWSTWSPCSVTCGHGNQTRSRSCGDFCTSTESQSCDLVPCP. Cystine bridges form between C209-C236, C213-C241, and C224-C228. An N-linked (GlcNAc...) asparagine glycan is attached at N217. N258 and N349 each carry an N-linked (GlcNAc...) asparagine glycan. Positions 262–425 constitute an AMOP domain; the sequence is PYGTDVGSCE…LHCMENPQQD (164 aa).

The protein belongs to the isthmin family.

Its subcellular location is the secreted. In Danio rerio (Zebrafish), this protein is Isthmin-2 (ism2).